Reading from the N-terminus, the 409-residue chain is Nucleoprotein (409 aa).

Disordered stretches follow at residues 1-84 (MASG…KGGR) and 121-194 (ADTK…DSGD). Residues 15–31 (PVIKLGGPKPPKVGSSG) are compositionally biased toward low complexity. An RNA-binding region spans residues 29–160 (SSGNASWFQA…GNFRWDFIPL (132 aa)). Residues 31–156 (GNASWFQAIK…GGPDGNFRWD (126 aa)) enclose the CoV N NTD domain. Residues 70-84 (YWRRQARFKPGKGGR) show a composition bias toward basic residues. Low complexity predominate over residues 162-179 (RGRSGRSTAASSAAASRA). Residues 180-192 (PSREGSRGRRSDS) are compositionally biased toward basic and acidic residues. 2 positions are modified to phosphoserine; by host: Ser-190 and Ser-192. Positions 215 to 331 (TKAKADEMAH…QCVDGVGTRP (117 aa)) constitute a CoV N CTD domain. The interval 226–333 (RYCKRTIPPN…VDGVGTRPKD (108 aa)) is dimerization. 2 cysteine pairs are disulfide-bonded: Cys-281–Cys-308 and Cys-320–Cys-323. Residues 327-396 (VGTRPKDDEP…QLEFYDEPKV (70 aa)) form a disordered region. A compositionally biased stretch (basic residues) spans 358–367 (QRPKKEKKLK). Basic and acidic residues predominate over residues 368-384 (KQDDEADKALTSDEERN). Phosphothreonine; by host is present on Thr-378. At Ser-379 the chain carries Phosphoserine; by host.

Belongs to the gammacoronavirus nucleocapsid protein family. As to quaternary structure, homooligomer. Both monomeric and oligomeric forms interact with RNA. Interacts with protein M. Interacts with NSP3; this interaction serves to tether the genome to the newly translated replicase-transcriptase complex at a very early stage of infection. Post-translationally, ADP-ribosylated. The ADP-ribosylation is retained in the virion during infection. In terms of processing, phosphorylated on serine and threonine residues.

It localises to the virion. Its subcellular location is the host endoplasmic reticulum-Golgi intermediate compartment. It is found in the host Golgi apparatus. In terms of biological role, packages the positive strand viral genome RNA into a helical ribonucleocapsid (RNP) and plays a fundamental role during virion assembly through its interactions with the viral genome and membrane protein M. Plays an important role in enhancing the efficiency of subgenomic viral RNA transcription as well as viral replication. In Gallus gallus (Chicken), this protein is Nucleoprotein.